The chain runs to 219 residues: Phosphatidylserine decarboxylase proenzyme (219 aa).

The active-site Schiff-base intermediate with substrate; via pyruvic acid is serine 182. Serine 182 carries the pyruvic acid (Ser); by autocatalysis modification.

It belongs to the phosphatidylserine decarboxylase family. PSD-A subfamily. As to quaternary structure, heterodimer of a large membrane-associated beta subunit and a small pyruvoyl-containing alpha subunit. Pyruvate is required as a cofactor. Post-translationally, is synthesized initially as an inactive proenzyme. Formation of the active enzyme involves a self-maturation process in which the active site pyruvoyl group is generated from an internal serine residue via an autocatalytic post-translational modification. Two non-identical subunits are generated from the proenzyme in this reaction, and the pyruvate is formed at the N-terminus of the alpha chain, which is derived from the carboxyl end of the proenzyme. The post-translation cleavage follows an unusual pathway, termed non-hydrolytic serinolysis, in which the side chain hydroxyl group of the serine supplies its oxygen atom to form the C-terminus of the beta chain, while the remainder of the serine residue undergoes an oxidative deamination to produce ammonia and the pyruvoyl prosthetic group on the alpha chain.

It localises to the cell membrane. The enzyme catalyses a 1,2-diacyl-sn-glycero-3-phospho-L-serine + H(+) = a 1,2-diacyl-sn-glycero-3-phosphoethanolamine + CO2. The protein operates within phospholipid metabolism; phosphatidylethanolamine biosynthesis; phosphatidylethanolamine from CDP-diacylglycerol: step 2/2. Functionally, catalyzes the formation of phosphatidylethanolamine (PtdEtn) from phosphatidylserine (PtdSer). In Chlorobium phaeovibrioides (strain DSM 265 / 1930) (Prosthecochloris vibrioformis (strain DSM 265)), this protein is Phosphatidylserine decarboxylase proenzyme.